We begin with the raw amino-acid sequence, 238 residues long: MTKEQFAEVLAAQGISLTDRQKEQFDHFFRLLVEWNEKMNLTGITEEGQVYNKHFYDSITPAFYFPFDQVQSVVDIGGGAGFPSIPLKICFPHLKMTIIDSLNKRMSFLQHVAKELGLENVNPVHGRAEDRGQEAMYREKFDLVVARAVARLNLLSEFCLPFAKVGGHFVALKGAEITPELAEAKKAIKTLGGKTRKVETFQLLEEAGERNIVIMEKIEATPKSYPRKAGVPAKKPLV.

Residues Gly-77, Phe-82, 128–129, and Arg-147 contribute to the S-adenosyl-L-methionine site; that span reads AE.

It belongs to the methyltransferase superfamily. RNA methyltransferase RsmG family.

It localises to the cytoplasm. Functionally, specifically methylates the N7 position of guanine in position 535 of 16S rRNA. The chain is Ribosomal RNA small subunit methyltransferase G from Brevibacillus brevis (strain 47 / JCM 6285 / NBRC 100599).